We begin with the raw amino-acid sequence, 444 residues long: Maturase K (444 aa).

This sequence belongs to the intron maturase 2 family. MatK subfamily.

Its subcellular location is the plastid. It localises to the chloroplast. Functionally, usually encoded in the trnK tRNA gene intron. Probably assists in splicing its own and other chloroplast group II introns. This chain is Maturase K, found in Chamaecyparis lawsoniana (Lawson false cypress).